Consider the following 260-residue polypeptide: Small ribosomal subunit protein uS2 (260 aa).

A disordered region spans residues 240–260 (VLKPKLPYQPNRRPYQETVKK).

The protein belongs to the universal ribosomal protein uS2 family.

The polypeptide is Small ribosomal subunit protein uS2 (Phytoplasma australiense).